The chain runs to 692 residues: Protein arginine N-methyltransferase 7 (692 aa).

SAM-dependent MTase PRMT-type domains are found at residues Glu14–Trp359 and Ala368–Arg692.

This sequence belongs to the class I-like SAM-binding methyltransferase superfamily. Protein arginine N-methyltransferase family. PRMT7 subfamily.

In terms of biological role, essential arginine methyltransferase that can both catalyze the formation of omega-N monomethylarginine (MMA) and symmetrical dimethylarginine (sDMA). Specifically mediates the symmetrical dimethylation of arginine residues in the small nuclear ribonucleoproteins SmD1 and SmD3. The protein is Protein arginine N-methyltransferase 7 (Art7) of Drosophila persimilis (Fruit fly).